The following is a 37-amino-acid chain: Mu-agatoxin-Aa1f (37 aa).

Disulfide bonds link Cys2–Cys18, Cys9–Cys23, Cys17–Cys33, and Cys25–Cys31. Residue Asn37 is modified to Asparagine amide.

This sequence belongs to the neurotoxin 07 (Beta/delta-agtx) family. 03 (aga-4) subfamily. Aga sub-subfamily. Expressed by the venom gland.

It localises to the secreted. In terms of biological role, insecticidal neurotoxin that induces an irreversible spastic paralysis when injected into insects. Modifies presynaptic voltage-gated sodium channels (Nav), causing them to open at the normal resting potential of the nerve. This leads to spontaneous release of neurotransmitter and repetitive action potentials in motor neurons. This is Mu-agatoxin-Aa1f from Agelenopsis aperta (North American funnel-web spider).